A 194-amino-acid polypeptide reads, in one-letter code: Peptidyl-tRNA hydrolase (194 aa).

Tyr-16 contributes to the tRNA binding site. His-21 (proton acceptor) is an active-site residue. Residues Tyr-67, Asn-69, and Asn-115 each contribute to the tRNA site.

This sequence belongs to the PTH family. Monomer.

The protein localises to the cytoplasm. The catalysed reaction is an N-acyl-L-alpha-aminoacyl-tRNA + H2O = an N-acyl-L-amino acid + a tRNA + H(+). Hydrolyzes ribosome-free peptidyl-tRNAs (with 1 or more amino acids incorporated), which drop off the ribosome during protein synthesis, or as a result of ribosome stalling. In terms of biological role, catalyzes the release of premature peptidyl moieties from peptidyl-tRNA molecules trapped in stalled 50S ribosomal subunits, and thus maintains levels of free tRNAs and 50S ribosomes. In Synechocystis sp. (strain ATCC 27184 / PCC 6803 / Kazusa), this protein is Peptidyl-tRNA hydrolase.